Reading from the N-terminus, the 675-residue chain is Polyphosphate kinase (675 aa).

Asn-42 is an ATP binding site. Arg-372 and Arg-401 together coordinate Mg(2+). His-431 acts as the Phosphohistidine intermediate in catalysis. ATP-binding residues include Tyr-464, Arg-558, and His-586.

Belongs to the polyphosphate kinase 1 (PPK1) family. It depends on Mg(2+) as a cofactor. An intermediate of this reaction is the autophosphorylated ppk in which a phosphate is covalently linked to a histidine residue through a N-P bond.

It carries out the reaction [phosphate](n) + ATP = [phosphate](n+1) + ADP. Catalyzes the reversible transfer of the terminal phosphate of ATP to form a long-chain polyphosphate (polyP). In Helicobacter pylori (strain J99 / ATCC 700824) (Campylobacter pylori J99), this protein is Polyphosphate kinase.